Consider the following 181-residue polypeptide: ATP synthase subunit delta (181 aa).

Belongs to the ATPase delta chain family. As to quaternary structure, F-type ATPases have 2 components, F(1) - the catalytic core - and F(0) - the membrane proton channel. F(1) has five subunits: alpha(3), beta(3), gamma(1), delta(1), epsilon(1). F(0) has three main subunits: a(1), b(2) and c(10-14). The alpha and beta chains form an alternating ring which encloses part of the gamma chain. F(1) is attached to F(0) by a central stalk formed by the gamma and epsilon chains, while a peripheral stalk is formed by the delta and b chains.

It is found in the cell inner membrane. Its function is as follows. F(1)F(0) ATP synthase produces ATP from ADP in the presence of a proton or sodium gradient. F-type ATPases consist of two structural domains, F(1) containing the extramembraneous catalytic core and F(0) containing the membrane proton channel, linked together by a central stalk and a peripheral stalk. During catalysis, ATP synthesis in the catalytic domain of F(1) is coupled via a rotary mechanism of the central stalk subunits to proton translocation. This protein is part of the stalk that links CF(0) to CF(1). It either transmits conformational changes from CF(0) to CF(1) or is implicated in proton conduction. The protein is ATP synthase subunit delta of Desulfotalea psychrophila (strain LSv54 / DSM 12343).